The following is a 316-amino-acid chain: BTB/POZ domain-containing adapter for CUL3-mediated RhoA degradation protein 2 (316 aa).

The BTB domain maps to 28-96 (KYVQLNVGGS…LRDDTITLPQ (69 aa)). Polar residues predominate over residues 268 to 279 (EATSRSRSQASP). The disordered stretch occupies residues 268–288 (EATSRSRSQASPSEDEDTFEL). At Ser278 the chain carries Phosphoserine. At Ser280 the chain carries Phosphoserine; by CK2.

The protein belongs to the BACURD family. In terms of assembly, component of the BCR(TNFAIP1) E3 ubiquitin ligase complex, at least composed of CUL3, TNFAIP1/BACURD2 and RBX1. Interacts with RHOA; with a preference for RhoA-GDP. Interacts with RHOB. Interacts with PCNA. Interacts with CSNK2B. In terms of processing, phosphorylation at Ser-280 by CK2 facilitates the nucleus localization and increases interaction with PCNA.

It localises to the cytoplasm. It is found in the nucleus. The protein resides in the endosome. It participates in protein modification; protein ubiquitination. Functionally, substrate-specific adapter of a BCR (BTB-CUL3-RBX1) E3 ubiquitin-protein ligase complex involved in regulation of cytoskeleton structure. The BCR(TNFAIP1) E3 ubiquitin ligase complex mediates the ubiquitination of RHOA, leading to its degradation by the proteasome, thereby regulating the actin cytoskeleton and cell migration. Its interaction with RHOB may regulate apoptosis. May enhance the PCNA-dependent DNA polymerase delta activity. In Mus musculus (Mouse), this protein is BTB/POZ domain-containing adapter for CUL3-mediated RhoA degradation protein 2 (Tnfaip1).